Reading from the N-terminus, the 72-residue chain is Disintegrin crotatroxin (72 aa).

One can recognise a Disintegrin domain in the interval 1–72 (AGEECDCGSP…ADCPRNGLYG (72 aa)). 6 disulfide bridges follow: Cys-5–Cys-20, Cys-7–Cys-15, Cys-14–Cys-37, Cys-28–Cys-34, Cys-33–Cys-58, and Cys-46–Cys-65. A Cell attachment site motif is present at residues 50–52 (RGD).

This sequence belongs to the venom metalloproteinase (M12B) family. P-II subfamily. P-IIa sub-subfamily. As to quaternary structure, monomer. As to expression, expressed by the venom gland.

The protein resides in the secreted. Functionally, inhibits fibrinogen interaction with platelets. Acts by binding to the alpha-IIb/beta-3 (ITGA2B/ITGB3) on the platelet surface and inhibits aggregation induced by ADP, thrombin, platelet-activating factor and collagen. Its function is as follows. Inhibits ADP-induced platelet aggregation (IC(50) = 17.5nM), cancer cell migration in vitro, and experimental lung tumor colonization of cancer cells. This is Disintegrin crotatroxin from Crotalus atrox (Western diamondback rattlesnake).